We begin with the raw amino-acid sequence, 444 residues long: Vacuolar protein sorting-associated protein 4B (444 aa).

Positions 4–82 (TNTNLQKAID…KEYLKKKEKK (79 aa)) constitute an MIT domain. The stretch at 19-82 (AQEDKAGNYE…KEYLKKKEKK (64 aa)) forms a coiled coil. Residues 77 to 118 (KKKEKKPQKPVKEEQSGPVDEKGNDSDGEAESDDPEKKKLQN) form a disordered region. The segment covering 86 to 101 (PVKEEQSGPVDEKGND) has biased composition (basic and acidic residues). Phosphoserine occurs at positions 102 and 108. 174-181 (GPPGTGKS) is a binding site for ATP. The residue at position 410 (Ser410) is a Phosphoserine.

The protein belongs to the AAA ATPase family. In terms of assembly, proposed to be monomeric or homodimeric in nucleotide-free form and to oligomerize upon binding to ATP to form two stacked hexameric or heptameric rings with a central pore through which ESCRT-III substrates are translocated in an ATP-dependent manner. In vitro, associates on the inside of a helical tubular structure formed by a CHMP2A-CHMP3 polymer. Interacts with CHMP1A, CHMP1B, CHMP4B and CHMP6. Interacts with CHMP2A. Interacts with VPS4A; the interaction suggests a heteromeric assembly with VPS4A. Interacts with VTA1. In terms of tissue distribution, high level expression seen in the kidney. It is also expressed in the heart, brain, spleen, lung, liver, skeletal muscle, and testis.

Its subcellular location is the late endosome membrane. The catalysed reaction is ATP + H2O = ADP + phosphate + H(+). In terms of biological role, involved in late steps of the endosomal multivesicular bodies (MVB) pathway. Recognizes membrane-associated ESCRT-III assemblies and catalyzes their disassembly, possibly in combination with membrane fission. Redistributes the ESCRT-III components to the cytoplasm for further rounds of MVB sorting. MVBs contain intraluminal vesicles (ILVs) that are generated by invagination and scission from the limiting membrane of the endosome and mostly are delivered to lysosomes enabling degradation of membrane proteins, such as stimulated growth factor receptors, lysosomal enzymes and lipids. VPS4A/B are required for the exosomal release of SDCBP, CD63 and syndecan. Functionally, (Microbial infection) In conjunction with the ESCRT machinery also appears to function in topologically equivalent membrane fission events, such as the terminal stages of cytokinesis and enveloped virus budding (lentiviruses). This Mus musculus (Mouse) protein is Vacuolar protein sorting-associated protein 4B.